Here is a 473-residue protein sequence, read N- to C-terminus: MKTDTPSLETPQAARLRRRQLIRQLLERDKTPLAILFMAAVVGTLVGLAAVAFDKGVAWLQNQRMGALVHTADNYPLLLTVAFLCSAVLAMFGYFLVRKYAPEAGGSGIPEIEGALEDQRPVRWWRVLPVKFFGGLGTLGGGMVLGREGPTVQIGGNIGRMVLDIFRLKGDEARHTLLATGAAAGLAAAFNAPLAGILFIIEEMRPQFRYTLISIKAVFIGVIMSTIMYRIFNHEVALIDVGKLSDAPLNTQWLYLILGIIFGIFGPIFNKWVLGMQDLLHRVHGGNITKWVLMGGAIGGLCGLLGFVAPATSGGGFNLIPIATAGNFSMGMLVFIFVARVITTLLCFSSGAPGGIFAPMLALGTVLGTAFGMVVVELFPQYHLEAGTFAIAGMGALLAASIRAPLTGIILVLEMTDNYQLILPMIITGLGATLLAQFTGGKPLYSAILARTLAKQEAEQLARSKAASASENT.

Residues 1–32 are Cytoplasmic-facing; sequence MKTDTPSLETPQAARLRRRQLIRQLLERDKTP. A helical transmembrane segment spans residues 33-69; it reads LAILFMAAVVGTLVGLAAVAFDKGVAWLQNQRMGALV. The Periplasmic portion of the chain corresponds to 70–76; that stretch reads HTADNYP. A helical transmembrane segment spans residues 77–100; the sequence is LLLTVAFLCSAVLAMFGYFLVRKY. The Selectivity filter part_1 signature appears at 106 to 110; that stretch reads GSGIP. S107 is a binding site for chloride. Residues 109 to 116 constitute an intramembrane region (helical); that stretch reads IPEIEGAL. The Cytoplasmic segment spans residues 117 to 123; the sequence is EDQRPVR. 2 consecutive transmembrane segments (helical) span residues 124–141 and 148–166; these read WWRVLPVKFFGGLGTLGG and EGPTVQIGGNIGRMVLDIF. Residues 146 to 150 carry the Selectivity filter part_2 motif; the sequence is GREGP. Topologically, residues 167-176 are cytoplasmic; that stretch reads RLKGDEARHT. 2 consecutive intramembrane regions (helical) follow at residues 177 to 189 and 193 to 201; these read LLATGAAAGLAAA and PLAGILFII. Over 202 to 214 the chain is Cytoplasmic; it reads EEMRPQFRYTLIS. A helical membrane pass occupies residues 215–232; that stretch reads IKAVFIGVIMSTIMYRIF. Residues 233-252 lie on the Periplasmic side of the membrane; that stretch reads NHEVALIDVGKLSDAPLNTQ. Residues 253-281 form a helical membrane-spanning segment; that stretch reads WLYLILGIIFGIFGPIFNKWVLGMQDLLH. Over 282-287 the chain is Cytoplasmic; the sequence is RVHGGN. Residues 288-309 form a helical membrane-spanning segment; that stretch reads ITKWVLMGGAIGGLCGLLGFVA. Over 310–329 the chain is Periplasmic; the sequence is PATSGGGFNLIPIATAGNFS. A run of 2 helical transmembrane segments spans residues 330-349 and 355-376; these read MGMLVFIFVARVITTLLCFS and GIFAPMLALGTVLGTAFGMVVV. Residues 355–359 carry the Selectivity filter part_3 motif; it reads GIFAP. The chloride site is built by I356 and F357. Over 377-386 the chain is Periplasmic; it reads ELFPQYHLEA. An intramembrane region (helical) is located at residues 387 to 401; it reads GTFAIAGMGALLAAS. The note=Loop between two helices intramembrane region spans 402–404; that stretch reads IRA. Positions 405 to 416 form an intramembrane region, helical; sequence PLTGIILVLEMT. An intramembrane region (note=Loop between two helices) is located at residues 417 to 421; it reads DNYQL. The chain crosses the membrane as a helical span at residues 422–438; the sequence is ILPMIITGLGATLLAQF. Topologically, residues 439–473 are cytoplasmic; sequence TGGKPLYSAILARTLAKQEAEQLARSKAASASENT. Y445 is a chloride binding site.

This sequence belongs to the chloride channel (TC 2.A.49) family. ClcA subfamily. Homodimer.

It localises to the cell inner membrane. It carries out the reaction 2 chloride(in) + H(+)(out) = 2 chloride(out) + H(+)(in). Proton-coupled chloride transporter. Functions as antiport system and exchanges two chloride ions for 1 proton. Probably acts as an electrical shunt for an outwardly-directed proton pump that is linked to amino acid decarboxylation, as part of the extreme acid resistance (XAR) response. The polypeptide is H(+)/Cl(-) exchange transporter ClcA (Shigella boydii serotype 18 (strain CDC 3083-94 / BS512)).